A 122-amino-acid polypeptide reads, in one-letter code: Large ribosomal subunit protein bL12 (122 aa).

It belongs to the bacterial ribosomal protein bL12 family. Homodimer. Part of the ribosomal stalk of the 50S ribosomal subunit. Forms a multimeric L10(L12)X complex, where L10 forms an elongated spine to which 2 to 4 L12 dimers bind in a sequential fashion. Binds GTP-bound translation factors.

Forms part of the ribosomal stalk which helps the ribosome interact with GTP-bound translation factors. Is thus essential for accurate translation. The protein is Large ribosomal subunit protein bL12 of Staphylococcus aureus (strain Mu50 / ATCC 700699).